Reading from the N-terminus, the 248-residue chain is 2,3-bisphosphoglycerate-dependent phosphoglycerate mutase (248 aa).

Substrate-binding positions include 8–15, 21–22, Arg-60, 87–90, Lys-98, and 114–115; these read RHGESTWN, TG, ERHY, and RR. The active-site Tele-phosphohistidine intermediate is His-9. Residue Glu-87 is the Proton donor/acceptor of the active site. A disordered region spans residues 117–137; the sequence is YDTPPPALEPTDPRASYDDPR. Residues 127-137 are compositionally biased toward basic and acidic residues; sequence TDPRASYDDPR. Position 183 to 184 (183 to 184) interacts with substrate; that stretch reads GN.

This sequence belongs to the phosphoglycerate mutase family. BPG-dependent PGAM subfamily. As to quaternary structure, homodimer.

The catalysed reaction is (2R)-2-phosphoglycerate = (2R)-3-phosphoglycerate. It participates in carbohydrate degradation; glycolysis; pyruvate from D-glyceraldehyde 3-phosphate: step 3/5. Functionally, catalyzes the interconversion of 2-phosphoglycerate and 3-phosphoglycerate. This is 2,3-bisphosphoglycerate-dependent phosphoglycerate mutase from Cupriavidus taiwanensis (strain DSM 17343 / BCRC 17206 / CCUG 44338 / CIP 107171 / LMG 19424 / R1) (Ralstonia taiwanensis (strain LMG 19424)).